A 143-amino-acid chain; its full sequence is UPF0201 protein Pcal_0593 (143 aa).

The protein belongs to the UPF0201 family.

The polypeptide is UPF0201 protein Pcal_0593 (Pyrobaculum calidifontis (strain DSM 21063 / JCM 11548 / VA1)).